The following is a 1578-amino-acid chain: DNA-directed RNA polymerase subunit beta' (1578 aa).

The Zn(2+) site is built by C101, C103, C115, and C118. Mg(2+) contacts are provided by D1286, D1288, and D1290.

The protein belongs to the RNA polymerase beta' chain family. RpoC1 subfamily. As to quaternary structure, in plastids the minimal PEP RNA polymerase catalytic core is composed of four subunits: alpha, beta, beta', and beta''. When a (nuclear-encoded) sigma factor is associated with the core the holoenzyme is formed, which can initiate transcription. Mg(2+) serves as cofactor. Requires Zn(2+) as cofactor.

It localises to the plastid. The protein resides in the chloroplast. It catalyses the reaction RNA(n) + a ribonucleoside 5'-triphosphate = RNA(n+1) + diphosphate. In terms of biological role, DNA-dependent RNA polymerase catalyzes the transcription of DNA into RNA using the four ribonucleoside triphosphates as substrates. The chain is DNA-directed RNA polymerase subunit beta' from Tupiella akineta (Green alga).